The primary structure comprises 218 residues: Glutathione S-transferase class-mu 26 kDa isozyme 7 (218 aa).

Positions 2–83 constitute a GST N-terminal domain; that stretch reads PAKLGYWKIR…YIADKHGMLG (82 aa). Glutathione contacts are provided by residues 7–8, 41–45, 54–55, and 67–68; these read YW, WLGDK, NL, and QS. Residues 85-203 form the GST C-terminal domain; sequence TPEERARISM…KSERFIKWPL (119 aa). Position 111 (Tyr-111) interacts with substrate.

Belongs to the GST superfamily. Mu family. Homodimer.

It catalyses the reaction RX + glutathione = an S-substituted glutathione + a halide anion + H(+). Functionally, conjugation of reduced glutathione to a wide number of exogenous and endogenous hydrophobic electrophiles. GST isoenzymes appear to play a central role in the parasite detoxification system. Other functions are also suspected including a role in increasing the solubility of haematin in the parasite gut. This chain is Glutathione S-transferase class-mu 26 kDa isozyme 7, found in Fasciola hepatica (Liver fluke).